The chain runs to 306 residues: Probable thioesterase atnL (306 aa).

It belongs to the lcsJ thioesterase family.

In terms of biological role, part of the gene cluster that mediates the biosynthesis of aspercryptins, linear lipopeptides built from six amino acids including 2 highly unusual and nonproteogenic amino acids, 2-amino-octanoic acid (2aoa) and 2-amino-dodecanol (2adol). The core structure of aspercryptins is as follows: Ser/Ala-Thr-Ile/Val-2aoa-Asn-2adol. The first step of aspercryptin biosynthesis is the generation of the fatty acid precursors, octanoic and dodecanoic acids, by the FAS subunits atnF and atnM. The fatty acid precursors are likely transformed into the corresponding alpha-amino fatty acids in three steps. First, they are hydroxylated by the cytochrome P450 monooxygenase atnE, then oxidized to the corresponding alpha-keto acids by the NAD(P)-dependent oxidoreductase atnD, and finally converted to the alpha-amino fatty acids by the PLP-dependent aminotransferases atnH or atnJ. the alpha-amino fatty acids, 2-amino-octanoic and 2-amino-dodecanoic acids, are recognized, activated, and covalently tethered to the NRPS atnA by its fourth and sixth adenylation domains. The second module of atnA is the Thr module and contains an epimerase (E) domain responsible for the epimerization of Thr to D-allo-Thr. Additionally, despite atnA having only one epimerase domain, the first amino acid of aspercryptin A1 is D-Ser, suggesting that serine is either loaded directly as D-Ser on the first module or that the epimerase domain in the threonine module epimerizes both L-Ser and L-Thr. After condensation of the hexapeptide of aspercryptin, the C-terminal reductase (TE) domain might be involved in the reductive release and production of the aldehyde hexapeptide. Further reduction would generate aspercryptins. The variety of aspercryptins produced reflects the flexibility of the atnA NRPS, allowing incorporation of alanine instead of serine, valine for isoleucine, and a C10 fatty amino alcohol instead of the C12 version. AtnB seems to be involved in the selectivity for Ile versus Val by the third module. Moreover, type B, C and D aspercryptins have an additional N-terminal cichorine, acetyl and propionyl group respectively. This chain is Probable thioesterase atnL, found in Emericella nidulans (strain FGSC A4 / ATCC 38163 / CBS 112.46 / NRRL 194 / M139) (Aspergillus nidulans).